Reading from the N-terminus, the 546-residue chain is Cytochrome P450 monooxygenase alnH (546 aa).

A helical membrane pass occupies residues 11-31 (VPYSVPLLGSTVVILIGFIAI). 3 N-linked (GlcNAc...) asparagine glycosylation sites follow: Asn146, Asn258, and Asn425. A heme-binding site is contributed by Cys445.

The protein belongs to the cytochrome P450 family. Heme serves as cofactor.

It is found in the membrane. Its pathway is polyketide biosynthesis. In terms of biological role, cytochrome P450 monooxygenase; part of the gene cluster that mediates the biosynthesis of asperlin, a polyketide showing anti-inflammatory, antitumor and antibiotic activities. The first step of the asperlin biosynthesis is the production of the intermediate 2,4,6-octatrienoic acid by the highly redusing polyketide synthase alnA with cleavage of the PKS product by the esterase alnB. 2,4,6-octatrienoic acid is further converted to asperlin via several steps involving the remaining enzymes from the cluster. In Emericella nidulans (strain FGSC A4 / ATCC 38163 / CBS 112.46 / NRRL 194 / M139) (Aspergillus nidulans), this protein is Cytochrome P450 monooxygenase alnH.